The following is a 168-amino-acid chain: NADH-quinone oxidoreductase subunit E 2 (168 aa).

[2Fe-2S] cluster is bound by residues cysteine 77, cysteine 82, cysteine 118, and cysteine 122.

It belongs to the complex I 24 kDa subunit family. [2Fe-2S] cluster serves as cofactor.

It catalyses the reaction a quinone + NADH + 5 H(+)(in) = a quinol + NAD(+) + 4 H(+)(out). Functionally, NDH-1 shuttles electrons from NADH, via FMN and iron-sulfur (Fe-S) centers, to quinones in the respiratory chain. The immediate electron acceptor for the enzyme in this species is believed to be ubiquinone. Couples the redox reaction to proton translocation (for every two electrons transferred, four hydrogen ions are translocated across the cytoplasmic membrane), and thus conserves the redox energy in a proton gradient. The sequence is that of NADH-quinone oxidoreductase subunit E 2 (nuoE2) from Rhizobium meliloti (strain 1021) (Ensifer meliloti).